A 528-amino-acid polypeptide reads, in one-letter code: uncharacterized protein (528 aa).

FAD is bound at residue 6–35; the sequence is DYVVVGTGSAGAVVASRLSTDPATTVVALE. Histidine 468 functions as the Proton acceptor in the catalytic mechanism.

This sequence belongs to the GMC oxidoreductase family. FAD serves as cofactor.

This is an uncharacterized protein from Mycobacterium bovis (strain ATCC BAA-935 / AF2122/97).